The sequence spans 622 residues: 1,4-alpha-glucan branching enzyme GlgB (622 aa).

D300 (nucleophile) is an active-site residue. Catalysis depends on E351, which acts as the Proton donor.

Belongs to the glycosyl hydrolase 13 family. GlgB subfamily. As to quaternary structure, monomer.

It carries out the reaction Transfers a segment of a (1-&gt;4)-alpha-D-glucan chain to a primary hydroxy group in a similar glucan chain.. Its pathway is glycan biosynthesis; glycogen biosynthesis. Its function is as follows. Catalyzes the formation of the alpha-1,6-glucosidic linkages in glycogen by scission of a 1,4-alpha-linked oligosaccharide from growing alpha-1,4-glucan chains and the subsequent attachment of the oligosaccharide to the alpha-1,6 position. The chain is 1,4-alpha-glucan branching enzyme GlgB from Streptococcus agalactiae serotype III (strain NEM316).